We begin with the raw amino-acid sequence, 320 residues long: ATP-dependent 6-phosphofructokinase (320 aa).

Glycine 12 is an ATP binding site. ADP is bound by residues 22–26 (RGVVR) and 55–60 (RYSVSD). Residues 73-74 (RF) and 103-106 (GDGS) contribute to the ATP site. Mg(2+) is bound at residue aspartate 104. Position 126 to 128 (126 to 128 (TID)) interacts with substrate. Aspartate 128 functions as the Proton acceptor in the catalytic mechanism. Residue arginine 155 participates in ADP binding. Residues arginine 163 and 170–172 (MGR) each bind substrate. ADP-binding positions include 186–188 (GCE), lysine 212, and 214–216 (KKH). Residues glutamate 223, arginine 244, and 250–253 (HIQR) each bind substrate.

It belongs to the phosphofructokinase type A (PFKA) family. ATP-dependent PFK group I subfamily. Prokaryotic clade 'B1' sub-subfamily. In terms of assembly, homotetramer. Requires Mg(2+) as cofactor.

Its subcellular location is the cytoplasm. It catalyses the reaction beta-D-fructose 6-phosphate + ATP = beta-D-fructose 1,6-bisphosphate + ADP + H(+). It functions in the pathway carbohydrate degradation; glycolysis; D-glyceraldehyde 3-phosphate and glycerone phosphate from D-glucose: step 3/4. With respect to regulation, allosterically activated by ADP and other diphosphonucleosides, and allosterically inhibited by phosphoenolpyruvate. Catalyzes the phosphorylation of D-fructose 6-phosphate to fructose 1,6-bisphosphate by ATP, the first committing step of glycolysis. This Erwinia tasmaniensis (strain DSM 17950 / CFBP 7177 / CIP 109463 / NCPPB 4357 / Et1/99) protein is ATP-dependent 6-phosphofructokinase.